Consider the following 500-residue polypeptide: MASTPLLYVLVIILSAVYLLRRRSNPLYAIPAVGPSLPLLSYIGALRFTRHAHEMLQEGYIKYKGSAFRLAQLDRWVVVLCGPKMNEELQRMPDDQVSFLDAAEDLVQTKYTIAKNVIENPIHISVMRGPLTRNLAPLLLDVIDEINIGVEEHIPTRGDEWVSVPGLATMTQIVSRASNRVFVGLPMCRDPEYFKIISNFPRDVAKGRFILSITPTFLKPIIGPLLPWSRRTVRQYSALMKPIIEERQRLLLEHRDPHDPDRPNDFMTWLIEEGRAVDQPVDLLVNALLSSNFVAIHTSSISVTHALYNLAAYPEYQQPVRDELVEVIKAEGWTKQAFGKMWKLDSFMRESQRMFGISAISVIRKALKDVTLSNGTVIPAGTLIAVAAEGTHYDEGSYDNPYIFNPFRFSDMREDEGERIKHQYVSTSSEYVSFGHGKHACPGRFFASNELKAILSRLILDFDMKFGGDGHRPPNQWFGSSIIPSQTANVMFRKRPDAGL.

Transmembrane regions (helical) follow at residues 1–21 and 26–46; these read MAST…YLLR and PLYA…IGAL. N-linked (GlcNAc...) asparagine glycosylation occurs at Asn374. Cys441 is a heme binding site.

It belongs to the cytochrome P450 family. Requires heme as cofactor.

The protein localises to the membrane. It functions in the pathway secondary metabolite biosynthesis. Cytochrome P450 monooxygenase that is able to use testosterone as a substrate for oxidation. The polypeptide is Cytochrome P450 monooxygenase 103 (Postia placenta (strain ATCC 44394 / Madison 698-R) (Brown rot fungus)).